Reading from the N-terminus, the 315-residue chain is Beta-carotene hydroxylase 1, chloroplastic (315 aa).

Residues 1–58 (MAAEISISASSRAICLQRNPFPAPKYFATAPPLLFFSPLTCNLDAILRSRRKPRLAAC) constitute a chloroplast transit peptide. Transmembrane regions (helical) follow at residues 112 to 132 (YLVA…ISVY) and 146 to 166 (FSEM…MEYW). The Fatty acid hydroxylase domain occupies 159–286 (AAIGMEYWAR…KFDGVPYGLF (128 aa)). Residues 171 to 176 (HRALWH) carry the Histidine box-1 motif. Residues 183 to 187 (HESHH) carry the Histidine box-2 motif. 2 helical membrane passes run 196–216 (LNDI…SFGF) and 222–242 (IPGL…AYMF). The Histidine box-3 signature appears at 244–249 (HDGLVH). The Histidine box-4 motif lies at 270–274 (HQLHH).

Belongs to the sterol desaturase family.

It is found in the plastid. It localises to the chloroplast membrane. The catalysed reaction is all-trans-beta-carotene + 4 reduced [2Fe-2S]-[ferredoxin] + 2 O2 + 4 H(+) = all-trans-zeaxanthin + 4 oxidized [2Fe-2S]-[ferredoxin] + 2 H2O. It carries out the reaction all-trans-beta-carotene + 2 reduced [2Fe-2S]-[ferredoxin] + O2 + 2 H(+) = beta-cryptoxanthin + 2 oxidized [2Fe-2S]-[ferredoxin] + H2O. It catalyses the reaction beta-cryptoxanthin + 2 reduced [2Fe-2S]-[ferredoxin] + O2 + 2 H(+) = all-trans-zeaxanthin + 2 oxidized [2Fe-2S]-[ferredoxin] + H2O. With respect to regulation, inhibited by o-phenanthroline and 8-hydroxyquinoline. Functionally, nonheme diiron monooxygenase involved in the biosynthesis of xanthophylls. Specific for beta-ring hydroxylations of beta-carotene. Produces beta-cryptoxanthin and zeaxanthin. Uses ferredoxin as an electron donor. The protein is Beta-carotene hydroxylase 1, chloroplastic of Capsicum annuum (Capsicum pepper).